The following is a 304-amino-acid chain: MAGREKTKSANRVLRISQLDALELNKALEQLVWSQFTQCFHGFKPGLLARFEPEVKACLWLFLWRFTIYSKNATVGQSVLNIQYKNDFSSNSRYQPPSKNQKLWYAVCTIGGRWLEERCYDLFRNRHLASFGKVKQCMNVMVGLLKLGELINFLIFLQKGKFATLTERLLGIHSVFCKPQNIREVGFDYMNRELLWHGFAEFLIFLLPLINIQKFKAKLSSWCIPLTGAASSDSALASSGKECALCGEWPTMPHTIGCEHVFCYYCVKSSFLFDMYFTCPKCGIEVHSVQPLKSGIEMSEVNAL.

Residues Met1–Leu14 are Peroxisomal matrix-facing. A helical membrane pass occupies residues Arg15–His41. At Gly42–Leu47 the chain is on the cytoplasmic side. A helical transmembrane segment spans residues Leu48 to Ala73. Residues Thr74–Pro97 lie on the Peroxisomal matrix side of the membrane. The chain crosses the membrane as a helical span at residues Ser98–Arg124. Residues Asn125 to Gly132 lie on the Cytoplasmic side of the membrane. Residues Lys133 to Lys159 traverse the membrane as a helical segment. At Gly160–Gly186 the chain is on the peroxisomal matrix side. The helical transmembrane segment at Phe187–Ile210 threads the bilayer. Residues Asn211–Leu304 are Cytoplasmic-facing. Cys243, Cys246, Cys258, His260, Cys263, Cys266, Cys279, and Cys282 together coordinate Zn(2+). The RING-type zinc-finger motif lies at Cys243–Gly283.

Belongs to the pex2/pex10/pex12 family. As to quaternary structure, component of the PEX2-PEX10-PEX12 retrotranslocation channel, composed of PEX2, PEX10 and PEX12. Forms intramolecular and intermolecular disulfide bonds in response to reactive oxygen species (ROS), promoting higher stability.

Its subcellular location is the peroxisome membrane. The enzyme catalyses [E2 ubiquitin-conjugating enzyme]-S-ubiquitinyl-L-cysteine + [acceptor protein]-L-cysteine = [E2 ubiquitin-conjugating enzyme]-L-cysteine + [acceptor protein]-S-ubiquitinyl-L-cysteine.. It carries out the reaction S-ubiquitinyl-[E2 ubiquitin-conjugating enzyme]-L-cysteine + [acceptor protein]-L-lysine = [E2 ubiquitin-conjugating enzyme]-L-cysteine + N(6)-ubiquitinyl-[acceptor protein]-L-lysine.. It participates in protein modification; protein ubiquitination. In terms of biological role, E3 ubiquitin-protein ligase component of a retrotranslocation channel required for peroxisome organization by mediating export of the PEX5 receptor from peroxisomes to the cytosol, thereby promoting PEX5 recycling. The retrotranslocation channel is composed of PEX2, PEX10 and PEX12; each subunit contributing transmembrane segments that coassemble into an open channel that specifically allows the passage of PEX5 through the peroxisomal membrane. PEX2 also regulates peroxisome organization by acting as a E3 ubiquitin-protein ligase. PEX2 ubiquitinates PEX5 during its passage through the retrotranslocation channel: catalyzes monoubiquitination of PEX5 at 'Cys-11', a modification that acts as a signal for PEX5 extraction into the cytosol. Required for pexophagy in response to starvation by mediating ubiquitination of peroxisomal proteins, such as PEX5 and ABCD3/PMP70. Also involved in the response to reactive oxygen species (ROS) by mediating 'Lys-48'-linked polyubiquitination and subsequent degradation of PNPLA2/ATGL, thereby regulating lipolysis. The chain is Peroxisome biogenesis factor 2 (PEX2) from Cricetulus griseus (Chinese hamster).